The primary structure comprises 258 residues: Gamma-secretase subunit Aph-1b (258 aa).

Helical transmembrane passes span 3 to 23 (VAVF…LFMF), 32 to 52 (VIFL…SSLV), 70 to 90 (GLLI…RYGY), 118 to 138 (AYVS…VNIL), 161 to 181 (AFMT…FFEA), 187 to 207 (WWAL…TFVN), and 214 to 234 (LIPT…CAGG).

The protein belongs to the APH-1 family. In terms of assembly, component of the gamma-secretase complex, a complex composed of a presenilin homodimer (PSEN1 or PSEN2), nicastrin (NCSTN), APH1 and PEN2.

The protein resides in the membrane. Its function is as follows. Essential subunit of the gamma-secretase complex, an endoprotease complex that catalyzes the intramembrane cleavage of integral proteins such as Notch receptors. It may represent a stabilizing cofactor for the presenilin homodimer that promotes the formation of a stable complex. The chain is Gamma-secretase subunit Aph-1b (aph1b) from Danio rerio (Zebrafish).